The primary structure comprises 212 residues: Nitrogen regulatory protein P-II homolog (212 aa).

3 stretches are compositionally biased toward low complexity: residues 1-12 (MSSPATAAAAAA), 32-46 (TTTT…SRSR), and 63-74 (PPTAARAQSAAA). A chloroplast-targeting transit peptide spans 1–68 (MSSPATAAAA…PRRLPPTAAR (68 aa)). The interval 1–74 (MSSPATAAAA…TAARAQSAAA (74 aa)) is disordered. Residues 117–121 (GFGAQ) and 170–173 (GDGK) each bind ATP. G119 is a Mg(2+) binding site.

The protein belongs to the P(II) protein family. As to quaternary structure, homodimer.

It localises to the plastid. The protein resides in the chloroplast. Participates in sensing carbon and organic nitrogen status and regulates some steps of primary carbon and nitrogen metabolism. The polypeptide is Nitrogen regulatory protein P-II homolog (GLB) (Oryza sativa subsp. japonica (Rice)).